We begin with the raw amino-acid sequence, 98 residues long: Co-chaperonin GroES (98 aa).

It belongs to the GroES chaperonin family. In terms of assembly, heptamer of 7 subunits arranged in a ring. Interacts with the chaperonin GroEL.

It localises to the cytoplasm. Its function is as follows. Together with the chaperonin GroEL, plays an essential role in assisting protein folding. The GroEL-GroES system forms a nano-cage that allows encapsulation of the non-native substrate proteins and provides a physical environment optimized to promote and accelerate protein folding. GroES binds to the apical surface of the GroEL ring, thereby capping the opening of the GroEL channel. The sequence is that of Co-chaperonin GroES from Bartonella bacilliformis (strain ATCC 35685 / KC583 / Herrer 020/F12,63).